The chain runs to 352 residues: Invasion chromosome antigen T (352 aa).

It belongs to the IcaT/YfdF family.

The protein resides in the secreted. Its function is as follows. May contribute to pathogenesis, although some of its characteristics suggest it is a fossil gene. The polypeptide is Invasion chromosome antigen T (Shigella flexneri serotype 5a (strain M90T)).